A 102-amino-acid polypeptide reads, in one-letter code: MATKLIVIAFLCAALIAVVQSAPQYAQGEEPTYDEDDDEPIKPHSSADPDASYEEFDPSQLTEYANTAQDPGRRPHFLEQANSNNGDQLPSQSDSSSESTEH.

Residues 1-21 (MATKLIVIAFLCAALIAVVQS) form the signal peptide. Residues 25–102 (YAQGEEPTYD…SDSSSESTEH (78 aa)) form a disordered region. A compositionally biased stretch (polar residues) spans 59-69 (SQLTEYANTAQ). Residues 70 to 73 (DPGR) form a blocks active site cleft of host thrombin in a reverse direction compared to substrates region. The segment covering 80-90 (QANSNNGDQLP) has biased composition (polar residues). The segment covering 91-102 (SQSDSSSESTEH) has biased composition (low complexity).

The protein belongs to the anophelin family. Interacts with human F2 (thrombin); the interaction results in thrombin inhibition.

Its subcellular location is the secreted. In terms of biological role, salivary protein with anticoagulant activity that inhibits host thrombin (F2). The protein is Salivary thrombin inhibitor anophelin of Anopheles funestus (African malaria mosquito).